The sequence spans 792 residues: Lon protease (792 aa).

The Lon N-terminal domain occupies 16–211 (DAVVVVPVSN…KVSAFLAQRL (196 aa)). ATP is bound at residue 361–368 (GPPGVGKT). In terms of domain architecture, Lon proteolytic spans 597-778 (TSVPGVATGL…EDAIEAGLDP (182 aa)). Residues S684 and K727 contribute to the active site.

It belongs to the peptidase S16 family. As to quaternary structure, homohexamer. Organized in a ring with a central cavity.

Its subcellular location is the cytoplasm. It carries out the reaction Hydrolysis of proteins in presence of ATP.. ATP-dependent serine protease that mediates the selective degradation of mutant and abnormal proteins as well as certain short-lived regulatory proteins. Required for cellular homeostasis and for survival from DNA damage and developmental changes induced by stress. Degrades polypeptides processively to yield small peptide fragments that are 5 to 10 amino acids long. Binds to DNA in a double-stranded, site-specific manner. This chain is Lon protease, found in Phenylobacterium zucineum (strain HLK1).